The primary structure comprises 394 residues: Tryptophan synthase beta chain (394 aa).

An N6-(pyridoxal phosphate)lysine modification is found at lysine 90.

This sequence belongs to the TrpB family. As to quaternary structure, tetramer of two alpha and two beta chains. Pyridoxal 5'-phosphate is required as a cofactor.

It carries out the reaction (1S,2R)-1-C-(indol-3-yl)glycerol 3-phosphate + L-serine = D-glyceraldehyde 3-phosphate + L-tryptophan + H2O. It functions in the pathway amino-acid biosynthesis; L-tryptophan biosynthesis; L-tryptophan from chorismate: step 5/5. The beta subunit is responsible for the synthesis of L-tryptophan from indole and L-serine. The protein is Tryptophan synthase beta chain of Bacteroides thetaiotaomicron (strain ATCC 29148 / DSM 2079 / JCM 5827 / CCUG 10774 / NCTC 10582 / VPI-5482 / E50).